A 398-amino-acid chain; its full sequence is Succinyl-diaminopimelate desuccinylase (398 aa).

H68 contributes to the Zn(2+) binding site. D70 is a catalytic residue. D101 contributes to the Zn(2+) binding site. The active-site Proton acceptor is the E135. 3 residues coordinate Zn(2+): E136, E164, and H349.

Belongs to the peptidase M20A family. DapE subfamily. Homodimer. Requires Zn(2+) as cofactor. The cofactor is Co(2+).

The catalysed reaction is N-succinyl-(2S,6S)-2,6-diaminopimelate + H2O = (2S,6S)-2,6-diaminopimelate + succinate. It participates in amino-acid biosynthesis; L-lysine biosynthesis via DAP pathway; LL-2,6-diaminopimelate from (S)-tetrahydrodipicolinate (succinylase route): step 3/3. In terms of biological role, catalyzes the hydrolysis of N-succinyl-L,L-diaminopimelic acid (SDAP), forming succinate and LL-2,6-diaminopimelate (DAP), an intermediate involved in the bacterial biosynthesis of lysine and meso-diaminopimelic acid, an essential component of bacterial cell walls. The chain is Succinyl-diaminopimelate desuccinylase from Wolbachia pipientis subsp. Culex pipiens (strain wPip).